The following is a 341-amino-acid chain: uncharacterized protein (341 aa).

The next 10 membrane-spanning stretches (helical) occupy residues 10–30 (ALGVVLLLFVVFLWLISSFLT), 42–62 (PFLITYINTGTFVFYLIPWYF), 107–127 (LGFCIIWFAANYFSNSSLGFT), 129–149 (VASFTIISSMSGFFTLGLGTI), 155–175 (FTLSKLLALMASVGGVIIVVT), 192–212 (ALGNAYALLAALLYGCYSVMV), 226–246 (LFFGLVGLFDLILLWPFLIIL), 263–283 (LIVLIINASITFVSDYLWVIA), 290–310 (LLVTVGMSLSIPLALFFDILL), and 313–333 (HYLNFSLILGSLLVFAGFIVV).

The protein belongs to the TPT transporter family.

Its subcellular location is the vacuole membrane. It localises to the golgi apparatus membrane. This is an uncharacterized protein from Schizosaccharomyces pombe (strain 972 / ATCC 24843) (Fission yeast).